Here is a 274-residue protein sequence, read N- to C-terminus: Copper chaperone for superoxide dismutase (274 aa).

An HMA domain is found at 11 to 74 (LCTLEFAVQM…LLEGTGRQAV (64 aa)). 2 residues coordinate Cu cation: cysteine 22 and cysteine 25. Residue lysine 76 forms a Glycyl lysine isopeptide (Lys-Gly) (interchain with G-Cter in ubiquitin) linkage. The segment at 88 to 234 (AAVAILGGPG…LACGIIARSA (147 aa)) is superoxide dismutase-like. Cysteine 141 and cysteine 227 are disulfide-bonded. The Zn(2+) site is built by histidine 147, histidine 155, histidine 164, and aspartate 167. Glycyl lysine isopeptide (Lys-Gly) (interchain with G-Cter in ubiquitin) cross-links involve residues lysine 189, lysine 216, and lysine 241. Cu cation-binding residues include cysteine 244 and cysteine 246. Residue serine 267 is modified to Phosphoserine.

In the C-terminal section; belongs to the Cu-Zn superoxide dismutase family. Homodimer, and heterodimer with SOD1. Interacts with COMMD1. Interacts with XIAP/BIRC4. Interacts with SLC31A1(via C-terminal domain); this interaction is Cu(1+)-mediated. The heterodimer CCS:SOD1 interacts with SLC31A1; this heterotrimer is Cu(1+)-mediated and its maintenance is regulated through SOD1 activation. It depends on Cu(2+) as a cofactor. Zn(2+) is required as a cofactor. Post-translationally, ubiquitinion by XIAP/BIRC4 leads to enhancement of its chaperone activity toward its physiologic target, SOD1, rather than proteasomal degradation. XIAP/BIRC4 preferentially ubiquitinates at Lys-241. Ubiquitous.

It localises to the cytoplasm. Its function is as follows. Delivers copper to copper zinc superoxide dismutase (SOD1). The chain is Copper chaperone for superoxide dismutase from Homo sapiens (Human).